A 490-amino-acid polypeptide reads, in one-letter code: Costunolide synthase (490 aa).

The chain crosses the membrane as a helical; Signal-anchor for type II membrane protein span at residues 3–23 (PLTIVSLAVASFLLFAFWALS). N-linked (GlcNAc...) asparagine glycans are attached at residues asparagine 167 and asparagine 255. Cysteine 432 contributes to the heme binding site.

The protein belongs to the cytochrome P450 family. Requires heme as cofactor.

The protein resides in the membrane. It carries out the reaction germacra-1(10),4,11(13)-trien-12-oate + reduced [NADPH--hemoprotein reductase] + O2 = (+)-costunolide + oxidized [NADPH--hemoprotein reductase] + 2 H2O. It functions in the pathway secondary metabolite biosynthesis; terpenoid biosynthesis. In terms of biological role, involved in the biosynthesis of germacrene-derived sesquiterpene lactones. Component of the parthenolide biosynthetic pathway; parthenolide and conjugates are promising anti-cancer drugs highly active against colon cancer cells. Hydroxylates germacrene A acid to 6-alpha-hydroxy-germacrne A acid, a precursor of sesquiterpene lactones that spontaneously undergoes a lactonization which yields costunolide. In Lactuca sativa (Garden lettuce), this protein is Costunolide synthase.